Consider the following 412-residue polypeptide: Serine hydroxymethyltransferase (412 aa).

Residues L114 and 118-120 each bind (6S)-5,6,7,8-tetrahydrofolate; that span reads GHL. Position 223 is an N6-(pyridoxal phosphate)lysine (K223).

The protein belongs to the SHMT family. As to quaternary structure, homodimer. It depends on pyridoxal 5'-phosphate as a cofactor.

It is found in the cytoplasm. It carries out the reaction (6R)-5,10-methylene-5,6,7,8-tetrahydrofolate + glycine + H2O = (6S)-5,6,7,8-tetrahydrofolate + L-serine. The protein operates within one-carbon metabolism; tetrahydrofolate interconversion. It functions in the pathway amino-acid biosynthesis; glycine biosynthesis; glycine from L-serine: step 1/1. In terms of biological role, catalyzes the reversible interconversion of serine and glycine with tetrahydrofolate (THF) serving as the one-carbon carrier. This reaction serves as the major source of one-carbon groups required for the biosynthesis of purines, thymidylate, methionine, and other important biomolecules. Also exhibits THF-independent aldolase activity toward beta-hydroxyamino acids, producing glycine and aldehydes, via a retro-aldol mechanism. The chain is Serine hydroxymethyltransferase from Mesoplasma florum (strain ATCC 33453 / NBRC 100688 / NCTC 11704 / L1) (Acholeplasma florum).